Here is a 502-residue protein sequence, read N- to C-terminus: Cyanidin 3-O-glucoside 5-O-glucosyltransferase (acyl-glucose) (502 aa).

Residues 1–30 (MNMSCKFEIVLLVSWWLLLVLVFGVESSMF) form the signal peptide. N-linked (GlcNAc...) asparagine glycosylation is present at N2. A beta-D-glucoside is bound by residues Q52, H150, and 196 to 197 (NE). Catalysis depends on E197, which acts as the Proton donor. The N-linked (GlcNAc...) asparagine glycan is linked to N303. The a beta-D-glucoside site is built by Y320 and E388. E388 functions as the Nucleophile in the catalytic mechanism. N-linked (GlcNAc...) asparagine glycosylation is present at N425. A beta-D-glucoside contacts are provided by W435 and F451.

The protein belongs to the glycosyl hydrolase 1 family. In terms of tissue distribution, expressed in petals.

The protein localises to the vacuole. It catalyses the reaction cyanidin 3-O-beta-D-glucoside + 1-O-(trans-sinapoyl)-beta-D-glucose = cyanidin 3,5-di-O-beta-D-glucoside + (E)-sinapate. Its pathway is pigment biosynthesis; anthocyanin biosynthesis. Functionally, beta-glycosidase that catalyzes the transfer of glucose moiety to anthocyanidin 3-glucoside at the 5 position. Anthocyanins are ubiquitous colored pigments that are responsible for variations in petal color. Uses acyl-glucoses, but not UDP-glucose, as the glucose donor. The chain is Cyanidin 3-O-glucoside 5-O-glucosyltransferase (acyl-glucose) (AA5GT) from Dianthus caryophyllus (Carnation).